The sequence spans 91 residues: Small ribosomal subunit protein uS17 (91 aa).

It belongs to the universal ribosomal protein uS17 family. As to quaternary structure, part of the 30S ribosomal subunit.

Functionally, one of the primary rRNA binding proteins, it binds specifically to the 5'-end of 16S ribosomal RNA. This is Small ribosomal subunit protein uS17 from Malacoplasma penetrans (strain HF-2) (Mycoplasma penetrans).